Consider the following 373-residue polypeptide: D-amino-acid oxidase 3 (373 aa).

Residues 1–19 form the signal peptide; that stretch reads MVKYDAVILGSGVLGLSIA. FAD is bound by residues Ser-11, Leu-14, Asp-35, Ala-46, Ser-47, Gly-51, and Asn-53. Phe-57 serves as a coordination point for anthranilate. N-linked (GlcNAc...) asparagine glycosylation occurs at Asn-180. A disulfide bridge connects residues Cys-214 and Cys-271. Residues Tyr-229, Tyr-246, and Arg-296 each coordinate anthranilate. Residues Tyr-229, Tyr-246, and Arg-296 each contribute to the (R)-lactate site. FAD contacts are provided by Arg-296, Gly-342, Gly-345, Tyr-346, and Gln-347. Residues 371–373 carry the Microbody targeting signal motif; sequence AKL.

It belongs to the DAMOX/DASOX family. FAD is required as a cofactor.

It localises to the peroxisome matrix. The catalysed reaction is a D-alpha-amino acid + O2 + H2O = a 2-oxocarboxylate + H2O2 + NH4(+). In terms of biological role, catalyzes the oxidative deamination of D-amino acids with broad substrate specificity. Enables the organism to utilize D-amino acids as a source of nutrients. Enables the organism to utilize D-glutamate and D-methionine as a nitrogen source. Protects the organism from the toxicity of D-amino acids, including from D-glutamate. May play a role in its interaction with the host. The polypeptide is D-amino-acid oxidase 3 (Cryptococcus neoformans var. grubii serotype A (strain H99 / ATCC 208821 / CBS 10515 / FGSC 9487) (Filobasidiella neoformans var. grubii)).